Reading from the N-terminus, the 116-residue chain is Ribonuclease P protein component (116 aa).

Belongs to the RnpA family. As to quaternary structure, consists of a catalytic RNA component (M1 or rnpB) and a protein subunit.

It carries out the reaction Endonucleolytic cleavage of RNA, removing 5'-extranucleotides from tRNA precursor.. RNaseP catalyzes the removal of the 5'-leader sequence from pre-tRNA to produce the mature 5'-terminus. It can also cleave other RNA substrates such as 4.5S RNA. The protein component plays an auxiliary but essential role in vivo by binding to the 5'-leader sequence and broadening the substrate specificity of the ribozyme. The sequence is that of Ribonuclease P protein component from Acholeplasma laidlawii (strain PG-8A).